The chain runs to 358 residues: Ganglioside-induced differentiation-associated protein 1 (358 aa).

The region spanning 24-105 is the GST N-terminal domain; the sequence is VKLILYHWTH…YLEQTFLDEK (82 aa). Residues Lys50, Lys172, Lys173, Lys188, and Lys190 each participate in a glycyl lysine isopeptide (Lys-Gly) (interchain with G-Cter in ubiquitin) cross-link. The 157-residue stretch at 153-309 folds into the GST C-terminal domain; that stretch reads PAYATTRIRS…LISAVLPTAF (157 aa). Residue Lys203 is modified to N6-acetyllysine; alternate. Lys203 participates in a covalent cross-link: Glycyl lysine isopeptide (Lys-Gly) (interchain with G-Cter in ubiquitin); alternate. Glycyl lysine isopeptide (Lys-Gly) (interchain with G-Cter in ubiquitin) cross-links involve residues Lys206, Lys207, and Lys214. 2 helical membrane-spanning segments follow: residues 292–312 and 320–340; these read VLGH…FRVA and LGTT…FMLF. The tract at residues 320–358 is required for mitochondrial localization; the sequence is LGTTLVVGLLAGMGYFAFMLFRKRLGSMILALRPRPNYF.

The protein belongs to the GST superfamily. Homodimer. Post-translationally, ubiquitinated by PRKN during mitophagy, leading to its degradation and enhancement of mitophagy. Deubiquitinated by USP30.

Its subcellular location is the mitochondrion outer membrane. The protein resides in the cytoplasm. Functionally, regulates the mitochondrial network by promoting mitochondrial fission. The polypeptide is Ganglioside-induced differentiation-associated protein 1 (GDAP1) (Bos taurus (Bovine)).